The sequence spans 392 residues: Branched-chain-amino-acid aminotransferase, mitochondrial (392 aa).

A mitochondrion-targeting transit peptide spans Met1–Tyr27. Tyr168 serves as a coordination point for substrate. The residue at position 229 (Lys229) is an N6-(pyridoxal phosphate)lysine. The residue at position 321 (Lys321) is an N6-acetyllysine.

The protein belongs to the class-IV pyridoxal-phosphate-dependent aminotransferase family. In terms of assembly, homodimer. It depends on pyridoxal 5'-phosphate as a cofactor. Ubiquitous.

Its subcellular location is the mitochondrion. The catalysed reaction is L-leucine + 2-oxoglutarate = 4-methyl-2-oxopentanoate + L-glutamate. It catalyses the reaction L-isoleucine + 2-oxoglutarate = (S)-3-methyl-2-oxopentanoate + L-glutamate. It carries out the reaction L-valine + 2-oxoglutarate = 3-methyl-2-oxobutanoate + L-glutamate. In terms of biological role, catalyzes the first reaction in the catabolism of the essential branched chain amino acids leucine, isoleucine, and valine. May also function as a transporter of branched chain alpha-keto acids. The sequence is that of Branched-chain-amino-acid aminotransferase, mitochondrial (BCAT2) from Homo sapiens (Human).